The primary structure comprises 127 residues: Glycine cleavage system H protein (127 aa).

Positions 22 to 104 (EVVIGITHFA…YEGAWMVKVE (83 aa)) constitute a Lipoyl-binding domain. The residue at position 63 (Lys63) is an N6-lipoyllysine.

It belongs to the GcvH family. The glycine cleavage system is composed of four proteins: P, T, L and H. (R)-lipoate is required as a cofactor.

In terms of biological role, the glycine cleavage system catalyzes the degradation of glycine. The H protein shuttles the methylamine group of glycine from the P protein to the T protein. Its function is as follows. Is also involved in protein lipoylation via its role as an octanoyl/lipoyl carrier protein intermediate. The protein is Glycine cleavage system H protein of Bacillus cereus (strain ATCC 10987 / NRS 248).